A 332-amino-acid polypeptide reads, in one-letter code: 2,3-diketo-L-gulonate reductase (332 aa).

His-44 acts as the Proton donor in catalysis. NAD(+)-binding positions include 168 to 174 (ITMVDMS), 224 to 225 (WK), and 304 to 306 (GHE).

This sequence belongs to the LDH2/MDH2 oxidoreductase family. DlgD subfamily. In terms of assembly, homodimer.

Its subcellular location is the cytoplasm. It catalyses the reaction 3-dehydro-L-gulonate + NAD(+) = 2,3-dioxo-L-gulonate + NADH + H(+). The catalysed reaction is 3-dehydro-L-gulonate + NADP(+) = 2,3-dioxo-L-gulonate + NADPH + H(+). Functionally, catalyzes the reduction of 2,3-diketo-L-gulonate in the presence of NADH, to form 3-keto-L-gulonate. The sequence is that of 2,3-diketo-L-gulonate reductase from Klebsiella oxytoca.